The sequence spans 424 residues: UDP-sugar transporter protein SLC35A5 (424 aa).

At 1 to 8 the chain is on the cytoplasmic side; that stretch reads MEKQCCSH. Residues 9–29 form a helical membrane-spanning segment; that stretch reads PVICSLSTMYTFLLGAIFIAL. At 30 to 53 the chain is on the lumenal side; sequence SSSRILLVKYSANEENKYDYLPTT. The chain crosses the membrane as a helical span at residues 54–74; it reads ANVCSELVKLVFCVLVSFCVI. The Cytoplasmic portion of the chain corresponds to 75–93; sequence KKDHQSRNLKYASWKEFSN. A helical membrane pass occupies residues 94-116; that stretch reads FMKWSIPAFLYFLDNLIVFYVLS. Over 117–119 the chain is Lumenal; it reads YLQ. A helical transmembrane segment spans residues 120 to 142; sequence PAMAVIFSNFSIITTALLFRIVL. The Cytoplasmic segment spans residues 143–147; the sequence is KRRLN. A helical transmembrane segment spans residues 148–168; that stretch reads WIQWASLLILFLSIVALTAGT. The Lumenal segment spans residues 169–228; that stretch reads KTLQHNLAGHGFHHDAFFSPSNSCLLFRSECPRKDNCTAKEWTFPEAKWNTTARVFSHIR. An N-linked (GlcNAc...) asparagine glycan is attached at N204. Residues 229 to 249 form a helical membrane-spanning segment; it reads LGMGHVLIIVQCFISSMANIY. The Cytoplasmic portion of the chain corresponds to 250 to 263; that stretch reads NEKILKEGNQLAES. Residues 264 to 284 form a helical membrane-spanning segment; that stretch reads IFIQNSKLYFFGILFNGLTLG. Topologically, residues 285 to 303 are lumenal; the sequence is LQRSNRDQIKNCGFFYGHN. A helical transmembrane segment spans residues 304-324; it reads AFSVALIFVTAFQGLSVAFIL. Over 325-330 the chain is Cytoplasmic; it reads KFLDNM. Residues 331-351 form a helical membrane-spanning segment; the sequence is FHVLMAQVTTVIITTVSVLVF. The Lumenal portion of the chain corresponds to 352-354; the sequence is DFR. Residues 355–375 traverse the membrane as a helical segment; sequence PSLEFFLEAPSVLLSIFIYNA. The Cytoplasmic portion of the chain corresponds to 376-424; the sequence is SKPQGPEYAPRQERIRDLSGNLWERSSGDGEELERLTKPKSDESDEDTF. A phosphoserine mark is found at S394, S416, and S419. Positions 395–424 are disordered; it reads GNLWERSSGDGEELERLTKPKSDESDEDTF. Positions 408–417 are enriched in basic and acidic residues; sequence LERLTKPKSD.

It belongs to the nucleotide-sugar transporter family. SLC35A subfamily. In terms of assembly, probably forms homooligomers and heterooligomers with SLC35A1, SLC35A2, SLC35A3 and SLC35A4.

Its subcellular location is the golgi apparatus membrane. The catalysed reaction is UMP(out) + UDP-alpha-D-glucuronate(in) = UMP(in) + UDP-alpha-D-glucuronate(out). The enzyme catalyses UMP(out) + UDP-N-acetyl-alpha-D-glucosamine(in) = UMP(in) + UDP-N-acetyl-alpha-D-glucosamine(out). It catalyses the reaction UDP-N-acetyl-alpha-D-galactosamine(in) + UMP(out) = UDP-N-acetyl-alpha-D-galactosamine(out) + UMP(in). Its function is as follows. Probable UDP-sugar:UMP transmembrane antiporter involved in UDP-alpha-D-glucuronate/UDP-GlcA, UDP-GlcNAc/UDP-N-acetyl-alpha-D-glucosamine and UDP-N-acetyl-alpha-D-galactosamine/UDP-GalNAc transport from the cytosol to the lumen of the Golgi. The protein is UDP-sugar transporter protein SLC35A5 of Pongo abelii (Sumatran orangutan).